Here is a 368-residue protein sequence, read N- to C-terminus: Peptide chain release factor 2 (368 aa).

Q251 is subject to N5-methylglutamine.

It belongs to the prokaryotic/mitochondrial release factor family. In terms of processing, methylated by PrmC. Methylation increases the termination efficiency of RF2.

The protein localises to the cytoplasm. Its function is as follows. Peptide chain release factor 2 directs the termination of translation in response to the peptide chain termination codons UGA and UAA. The sequence is that of Peptide chain release factor 2 from Streptomyces avermitilis (strain ATCC 31267 / DSM 46492 / JCM 5070 / NBRC 14893 / NCIMB 12804 / NRRL 8165 / MA-4680).